A 281-amino-acid chain; its full sequence is Ribosomal RNA small subunit methyltransferase A (281 aa).

Asn18, Leu20, Gly45, Glu66, Asp91, and Asn118 together coordinate S-adenosyl-L-methionine.

This sequence belongs to the class I-like SAM-binding methyltransferase superfamily. rRNA adenine N(6)-methyltransferase family. RsmA subfamily.

The protein resides in the cytoplasm. The catalysed reaction is adenosine(1518)/adenosine(1519) in 16S rRNA + 4 S-adenosyl-L-methionine = N(6)-dimethyladenosine(1518)/N(6)-dimethyladenosine(1519) in 16S rRNA + 4 S-adenosyl-L-homocysteine + 4 H(+). Its function is as follows. Specifically dimethylates two adjacent adenosines (A1518 and A1519) in the loop of a conserved hairpin near the 3'-end of 16S rRNA in the 30S particle. May play a critical role in biogenesis of 30S subunits. This is Ribosomal RNA small subunit methyltransferase A from Histophilus somni (strain 129Pt) (Haemophilus somnus).